A 571-amino-acid chain; its full sequence is Streptolysin O (571 aa).

The N-terminal stretch at 1-33 (MSNKKTFKKYSRVAGLLTVALIIGNLVTANAES) is a signal peptide. 2 disordered regions span residues 32-56 (ESNKQNTASTETTTTNEQPKPESSE) and 81-108 (KEMPLESAEKEEKKSEDKKKSEEDHTEE). A compositionally biased stretch (low complexity) spans 37-48 (NTASTETTTTNE). Beta stranded transmembrane passes span 260-273 (KSQIEAALNVNSKI), 280-289 (IDFKSISKGE), 358-367 (SNDVEAAFSA), and 375-387 (KTNGKYSDILENS). A Conserved undecapeptide motif is present at residues 529–539 (ECTGLAWEWWR). A short sequence motif (cholesterol binding) is located at residue threonine 561.

It belongs to the cholesterol-dependent cytolysin family. In terms of assembly, homooligomeric pore complex of 35 to 50 subunits; when inserted in the host membrane.

The protein localises to the secreted. It is found in the host cell membrane. In terms of biological role, a cholesterol-dependent toxin that causes cytolysis by forming pores in cholesterol containing host membranes. After binding to target membranes, the protein undergoes a major conformation change, leading to its insertion in the host membrane and formation of an oligomeric pore complex. Cholesterol is required for binding to host membranes, membrane insertion and pore formation; cholesterol binding is mediated by a Thr-Leu pair in the C-terminus. Can be reversibly inactivated by oxidation. This chain is Streptolysin O (slo), found in Streptococcus pyogenes serotype M6 (strain ATCC BAA-946 / MGAS10394).